A 53-amino-acid polypeptide reads, in one-letter code: Large ribosomal subunit protein bL33 (53 aa).

Belongs to the bacterial ribosomal protein bL33 family.

This chain is Large ribosomal subunit protein bL33, found in Malacoplasma penetrans (strain HF-2) (Mycoplasma penetrans).